The sequence spans 520 residues: Mitogen-activated protein kinase kinase 3 (520 aa).

S69 carries the phosphoserine modification. Residues 83–339 (MRVFGAIGSG…ADQLLSHPFI (257 aa)) form the Protein kinase domain. ATP is bound by residues 89-97 (IGSGASSVV) and K112. Residue D207 is the Proton acceptor of the active site. The residue at position 235 (S235) is a Phosphoserine. A phosphothreonine mark is found at T241 and T245. The 151-residue stretch at 366 to 516 (LADMLTIHYY…YFLAKQELYI (151 aa)) folds into the NTF2 domain.

The protein belongs to the protein kinase superfamily. STE Ser/Thr protein kinase family. MAP kinase kinase subfamily. Interacts with MPK1, MPK2 and MPK7. Interacts with P.syringae type III effector HopF2. Interacts with MPK14. Binds to MAPKKK17 and MAPKKK18. Binds to MAPKKK20. In terms of processing, phosphorylation at Ser-235 and Thr-241 by MAP kinase kinase kinases positively regulates kinase activity. Phosphorylated by MAPKKK20. Mostly expressed in leaves, and, to a lower extent, in roots, seedlings, flower buds, flowers and siliques.

The protein localises to the nucleus. It is found in the cytoplasm. It catalyses the reaction L-seryl-[protein] + ATP = O-phospho-L-seryl-[protein] + ADP + H(+). The catalysed reaction is L-threonyl-[protein] + ATP = O-phospho-L-threonyl-[protein] + ADP + H(+). The enzyme catalyses L-tyrosyl-[protein] + ATP = O-phospho-L-tyrosyl-[protein] + ADP + H(+). In terms of biological role, MKK3-MPK6 module plays an important role in the jasmonate signal transduction pathway through the negative regulation of MYC2/JIN1 expression. Activates by phosphorylation the downstream MPK6, MPK7 and MPK8. MKK3-MPK7 module acts as a positive regulator of PR1 gene expression. MKK3-MPK8 module negatively regulates ROS accumulation through controlling expression of the RBOHD gene. Component of the abscisic acid (ABA) signaling pathway that may act as ABA signal transducer in the context of abiotic stresses. Activator of the C group MAP kinases. Activates MPK7 in response to ABA. Mitogen-activated protein kinase (MAPK) that is specifically regulated by MAPKKK20 and mediates signaling that regulates cortical microtubule functions. This is Mitogen-activated protein kinase kinase 3 from Arabidopsis thaliana (Mouse-ear cress).